The primary structure comprises 497 residues: Glycine receptor subunit beta (497 aa).

The first 22 residues, 1–22 (MKFLLTTAFLILISLWVEEAYS), serve as a signal peptide directing secretion. The Extracellular segment spans residues 23–268 (KEKSSKKGKG…IFTLRRQVGF (246 aa)). N54 carries N-linked (GlcNAc...) asparagine glycosylation. Positions 108 and 174 each coordinate glycine. Residues C183 and C197 are joined by a disulfide bond. The N-linked (GlcNAc...) asparagine glycan is linked to N242. Residues C243 and C255 are joined by a disulfide bond. T250 contributes to the glycine binding site. The helical transmembrane segment at 269 to 289 (YMMGVYAPTLLIVVLSWLSFW) threads the bilayer. At 290–294 (INPDA) the chain is on the cytoplasmic side. Residues 295–315 (SAARVPLGIFSVLSLASECTT) form a helical membrane-spanning segment. Over 316–327 (LAAELPKVSYVK) the chain is Extracellular. Residues 328-349 (ALDVWLIACLLFGFASLVEYAV) form a helical membrane-spanning segment. The Cytoplasmic segment spans residues 350–472 (VQVMLNNPKR…KPVIPTAAKR (123 aa)). Position 391 is a phosphothreonine (T391). The helical transmembrane segment at 473 to 496 (IDLYARALFPFCFLFFNVIYWSIY) threads the bilayer.

Belongs to the ligand-gated ion channel (TC 1.A.9) family. Glycine receptor (TC 1.A.9.3) subfamily. GLRB sub-subfamily. In terms of assembly, forms heteropentamers with glycin receptor alpha subunits. Heteropentamers with GLRA1 can be composed of two GLRA1 and three GLRB subunits, or three GLRA1 and two GLRB subunits, or four GLRA1 subunits and one GLRB subunit. Forms heteropentamers with GLRA2. Functional GLRB-GLRA2 heteropentamers contain four GLRA2 subunits and one GLRB subunit, although alternative subunit composition cannot be excluded. Forms a heteropentamer with GLRA3. Interacts with GPHN.

It localises to the postsynaptic cell membrane. It is found in the synapse. Its subcellular location is the cell projection. The protein resides in the dendrite. The protein localises to the cell membrane. It localises to the cytoplasm. It carries out the reaction chloride(in) = chloride(out). Its activity is regulated as follows. Channel opening is triggered by extracellular glycine. Heteropentameric channels composed of GLRB and GLRA1 are activated by lower glycine levels than homopentameric GLRA1. Subunit of heteromeric glycine-gated chloride channels. Plays an important role in the down-regulation of neuronal excitability. Contributes to the generation of inhibitory postsynaptic currents. This is Glycine receptor subunit beta (GLRB) from Homo sapiens (Human).